The sequence spans 263 residues: Very long chain fatty acid elongase F (263 aa).

7 helical membrane passes run 10–30 (IPVF…LLFV), 55–75 (IFQI…LFVL), 98–118 (LICI…IFFV), 135–155 (FAMA…GVAF), 159–179 (LCLL…LSSI), 193–213 (ITIA…ITLA), and 223–243 (LTYG…QFYY).

It belongs to the ELO family. In terms of tissue distribution, no expression in adults.

The protein resides in the endoplasmic reticulum membrane. It carries out the reaction a very-long-chain acyl-CoA + malonyl-CoA + H(+) = a very-long-chain 3-oxoacyl-CoA + CO2 + CoA. Condensing enzyme that elongates saturated and monounsaturated very long chain fatty acids, to yield products up to 30 carbons in length. The protein is Very long chain fatty acid elongase F of Drosophila simulans (Fruit fly).